Here is a 273-residue protein sequence, read N- to C-terminus: Coiled-coil domain-containing protein 122 (273 aa).

Residues 1–17 (MSDNKERKSQGFPKEDN) are compositionally biased toward basic and acidic residues. The disordered stretch occupies residues 1 to 39 (MSDNKERKSQGFPKEDNQDTSSLADAVEKVAKQQQSQAS). 2 coiled-coil regions span residues 24–116 (ADAV…TAQE) and 179–269 (NRIT…RKCI).

The sequence is that of Coiled-coil domain-containing protein 122 (CCDC122) from Homo sapiens (Human).